The sequence spans 393 residues: Probable acetyl-CoA acyltransferase (393 aa).

The active-site Acyl-thioester intermediate is cysteine 88. Active-site proton acceptor residues include histidine 349 and cysteine 378.

The protein belongs to the thiolase-like superfamily. Thiolase family.

It is found in the cytoplasm. The enzyme catalyses 2 acetyl-CoA = acetoacetyl-CoA + CoA. In Staphylococcus aureus (strain MRSA252), this protein is Probable acetyl-CoA acyltransferase.